The chain runs to 318 residues: Trans-prenyltransferase (318 aa).

A helical transmembrane segment spans residues 1–21 (MLHLIYISIIVVLIIILISYT). Positions 85, 88, and 122 each coordinate isopentenyl diphosphate. Residues Asp129 and Asp135 each contribute to the Mg(2+) site. Arg140 lines the dimethylallyl diphosphate pocket. An isopentenyl diphosphate-binding site is contributed by Arg141. Residues Lys216, Thr217, and Gln254 each coordinate dimethylallyl diphosphate.

Belongs to the FPP/GGPP synthase family. Asfivirus trans-prenyltransferase subfamily. The cofactor is Mg(2+).

Its subcellular location is the host endoplasmic reticulum. It localises to the host membrane. The catalysed reaction is isopentenyl diphosphate + dimethylallyl diphosphate = (2E)-geranyl diphosphate + diphosphate. It catalyses the reaction isopentenyl diphosphate + (2E)-geranyl diphosphate = (2E,6E)-farnesyl diphosphate + diphosphate. It carries out the reaction isopentenyl diphosphate + (2E,6E)-farnesyl diphosphate = (2E,6E,10E)-geranylgeranyl diphosphate + diphosphate. The enzyme catalyses isopentenyl diphosphate + (2E,6E,10E)-geranylgeranyl diphosphate = (2E,6E,10E,14E)-geranylfarnesyl diphosphate + diphosphate. The protein operates within isoprenoid biosynthesis; farnesyl diphosphate biosynthesis; farnesyl diphosphate from geranyl diphosphate and isopentenyl diphosphate: step 1/1. Its pathway is isoprenoid biosynthesis; geranyl diphosphate biosynthesis; geranyl diphosphate from dimethylallyl diphosphate and isopentenyl diphosphate: step 1/1. It participates in isoprenoid biosynthesis; geranylgeranyl diphosphate biosynthesis; geranylgeranyl diphosphate from farnesyl diphosphate and isopentenyl diphosphate: step 1/1. In terms of biological role, trans-prenyltransferase that catalyzes the sequential condensation of isopentenyl diphosphate (IPP) with different allylic diphosphates, such as dimethylallyl diphosphate (DMAPP), geranyl diphosphate (GPP), farnesyl diphosphate (FPP) and geranylgeranyl diphosphate (GGPP), farnesyl diphosphate being the best allylic substrate. This is Trans-prenyltransferase from African swine fever virus (isolate Tick/South Africa/Pretoriuskop Pr4/1996) (ASFV).